The chain runs to 284 residues: MNKKNNLLVLEDGVKVILAPAKVNFGLWIKGKRPDGYHDIFSIIHTIDLYDRIYIELHYTLEVLSVGPFSKNLKDNIVYEGVLAFSRLTGKNFDYKIVIEKNIPVGAGLGGASSDLAAVISYLNEELENPMKEQELTDFLSSFSKDAPFFLKGGCALVYGTGDQVKVLEPISREITVVYPNIEASTSKVYGAFTKQTEEVLLLEDILRLLEENDIENIIENHLQETAIEIYKEIGELIRFLESVGYKPYMSGSGSSVYVFGKLSDKIKMALESRGWYVYECKTI.

Lys22 is a catalytic residue. 104–114 is a binding site for ATP; the sequence is PVGAGLGGASS. Asp146 is a catalytic residue.

Belongs to the GHMP kinase family. IspE subfamily.

The catalysed reaction is 4-CDP-2-C-methyl-D-erythritol + ATP = 4-CDP-2-C-methyl-D-erythritol 2-phosphate + ADP + H(+). The protein operates within isoprenoid biosynthesis; isopentenyl diphosphate biosynthesis via DXP pathway; isopentenyl diphosphate from 1-deoxy-D-xylulose 5-phosphate: step 3/6. In terms of biological role, catalyzes the phosphorylation of the position 2 hydroxy group of 4-diphosphocytidyl-2C-methyl-D-erythritol. The chain is 4-diphosphocytidyl-2-C-methyl-D-erythritol kinase from Hydrogenobaculum sp. (strain Y04AAS1).